We begin with the raw amino-acid sequence, 331 residues long: Chitin synthase export chaperone (331 aa).

7 helical membrane passes run 52–72, 84–104, 122–142, 150–170, 184–204, 219–239, and 249–269; these read GAASFVHIIALAMTVIMILHI, IITFFYIYMLLTMCSLVIDAG, GLTSALCTSLLVNGFVGFQLY, VWLLRLTSTAMFAISFVISLL, VGMFVVLYILNAICIAVYLIM, LGHIAFGLLVFICGQVLLYAF, and HYLDGLFFTTICNLLAVMMVY.

This sequence belongs to the CHS7 family. Interacts with chs3.

Its subcellular location is the endoplasmic reticulum membrane. In terms of biological role, chaperone required for the export of the chitin synthase chs3 from the endoplasmic reticulum. The sequence is that of Chitin synthase export chaperone (chs7) from Aspergillus oryzae (strain ATCC 42149 / RIB 40) (Yellow koji mold).